Reading from the N-terminus, the 344-residue chain is Tetraacyldisaccharide 4'-kinase (344 aa).

An ATP-binding site is contributed by 65 to 72; the sequence is HAGGTGKT.

The protein belongs to the LpxK family.

The catalysed reaction is a lipid A disaccharide + ATP = a lipid IVA + ADP + H(+). The protein operates within glycolipid biosynthesis; lipid IV(A) biosynthesis; lipid IV(A) from (3R)-3-hydroxytetradecanoyl-[acyl-carrier-protein] and UDP-N-acetyl-alpha-D-glucosamine: step 6/6. In terms of biological role, transfers the gamma-phosphate of ATP to the 4'-position of a tetraacyldisaccharide 1-phosphate intermediate (termed DS-1-P) to form tetraacyldisaccharide 1,4'-bis-phosphate (lipid IVA). The polypeptide is Tetraacyldisaccharide 4'-kinase (Neisseria meningitidis serogroup A / serotype 4A (strain DSM 15465 / Z2491)).